The sequence spans 215 residues: Cytochrome b6 (215 aa).

A helical transmembrane segment spans residues 32–52; it reads IFHCLGGITLTCFLVQVATGF. Cysteine 35 lines the heme c pocket. The heme b site is built by histidine 86 and histidine 100. The next 3 helical transmembrane spans lie at 90 to 110, 116 to 136, and 186 to 206; these read ASMM…TGGF, LTWV…VTGY, and LHTF…FSMI. Heme b contacts are provided by histidine 187 and histidine 202.

The protein belongs to the cytochrome b family. PetB subfamily. In terms of assembly, the 4 large subunits of the cytochrome b6-f complex are cytochrome b6, subunit IV (17 kDa polypeptide, PetD), cytochrome f and the Rieske protein, while the 4 small subunits are PetG, PetL, PetM and PetN. The complex functions as a dimer. Heme b is required as a cofactor. Heme c serves as cofactor.

The protein resides in the plastid. It is found in the chloroplast thylakoid membrane. Component of the cytochrome b6-f complex, which mediates electron transfer between photosystem II (PSII) and photosystem I (PSI), cyclic electron flow around PSI, and state transitions. The polypeptide is Cytochrome b6 (Nymphaea alba (White water-lily)).